Reading from the N-terminus, the 261-residue chain is Imidazole glycerol phosphate synthase subunit HisF (261 aa).

Catalysis depends on residues Asp-16 and Asp-135.

It belongs to the HisA/HisF family. As to quaternary structure, heterodimer of HisH and HisF.

The protein resides in the cytoplasm. The catalysed reaction is 5-[(5-phospho-1-deoxy-D-ribulos-1-ylimino)methylamino]-1-(5-phospho-beta-D-ribosyl)imidazole-4-carboxamide + L-glutamine = D-erythro-1-(imidazol-4-yl)glycerol 3-phosphate + 5-amino-1-(5-phospho-beta-D-ribosyl)imidazole-4-carboxamide + L-glutamate + H(+). It participates in amino-acid biosynthesis; L-histidine biosynthesis; L-histidine from 5-phospho-alpha-D-ribose 1-diphosphate: step 5/9. Functionally, IGPS catalyzes the conversion of PRFAR and glutamine to IGP, AICAR and glutamate. The HisF subunit catalyzes the cyclization activity that produces IGP and AICAR from PRFAR using the ammonia provided by the HisH subunit. The sequence is that of Imidazole glycerol phosphate synthase subunit HisF from Mycolicibacterium smegmatis (strain ATCC 700084 / mc(2)155) (Mycobacterium smegmatis).